An 816-amino-acid chain; its full sequence is Protein EFR3 homolog B (816 aa).

Residues 206–219 (SGEGTESRSPSPLQ) are compositionally biased toward polar residues. Residues 206-230 (SGEGTESRSPSPLQASEKEKESPAE) are disordered. Residues 221 to 230 (SEKEKESPAE) are compositionally biased toward basic and acidic residues.

It belongs to the EFR3 family. As to quaternary structure, component of a phosphatidylinositol 4-kinase (PI4K) complex. Palmitoylated at its N-terminus, anchoring the protein to the plasma membrane.

It is found in the cell membrane. Component of a complex required to localize phosphatidylinositol 4-kinase (PI4K) to the plasma membrane. The complex acts as a regulator of phosphatidylinositol 4-phosphate (PtdIns(4)P) synthesis. In the complex, efr3b probably acts as the membrane-anchoring component. The polypeptide is Protein EFR3 homolog B (efr3b) (Danio rerio (Zebrafish)).